A 301-amino-acid polypeptide reads, in one-letter code: Peptidyl-prolyl cis-trans isomerase E (301 aa).

Positions 5 to 83 (KRVLYVGGLA…GRTIRVNLAK (79 aa)) constitute an RRM domain. Phosphoserine occurs at positions 91, 97, and 119. A disordered region spans residues 107–140 (GKTLEENKEEEGSEPPKAETQEGEPAAKKARSNP). In terms of domain architecture, PPIase cyclophilin-type spans 143–299 (YMDIKIGNKP…QKVIIADCGE (157 aa)).

It belongs to the cyclophilin-type PPIase family. PPIase E subfamily. Identified in the spliceosome C complex. Component of the XAB2 complex, a multimeric protein complex composed of XAB2, PRPF19, AQR, ZNF830, ISY1, and PPIE. Identified in a pentameric intron-binding (IB) complex composed of AQR, XAB2, ISY1, ZNF830 and PPIE that is incorporated into the spliceosome as a preassembled complex. The IB complex does not contain PRPF19. Interacts (via RNA-binding domain) with KMT2A (via the third PHD-type zinc-finger).

It is found in the nucleus. The catalysed reaction is [protein]-peptidylproline (omega=180) = [protein]-peptidylproline (omega=0). In terms of biological role, involved in pre-mRNA splicing as component of the spliceosome. Combines RNA-binding and PPIase activities. Binds mRNA and has a preference for single-stranded RNA molecules with poly-A and poly-U stretches, suggesting it binds to the poly(A)-region in the 3'-UTR of mRNA molecules. Catalyzes the cis-trans isomerization of proline imidic peptide bonds in proteins. Inhibits KMT2A activity; this requires proline isomerase activity. This chain is Peptidyl-prolyl cis-trans isomerase E (PPIE), found in Pongo abelii (Sumatran orangutan).